Reading from the N-terminus, the 157-residue chain is Fimbrial protein Q (157 aa).

Positions 1–6 (MNAQKG) are excised as a propeptide. Residue F7 is modified to N-methylphenylalanine. The cysteines at positions 136 and 155 are disulfide-linked.

The protein belongs to the N-Me-Phe pilin family. In terms of assembly, the pili are polar flexible filaments of about 5.4 nanometers diameter and 2.5 micrometers average length; they consist of only a single polypeptide chain arranged in a helical configuration of five subunits per turn in the assembled pilus.

Its subcellular location is the fimbrium. In Moraxella bovis, this protein is Fimbrial protein Q (tfpQ).